A 776-amino-acid chain; its full sequence is Chitin synthase 1 (776 aa).

The next 6 membrane-spanning stretches (helical) occupy residues 451–471, 487–507, 523–543, 558–578, 695–714, and 723–743; these read LVSL…FYFL, FWIF…LFIV, LIIL…VFVI, VLVS…LMSI, VVLF…VQVY, and IYLA…AIGS.

It belongs to the chitin synthase family.

It localises to the cell membrane. The enzyme catalyses [(1-&gt;4)-N-acetyl-beta-D-glucosaminyl](n) + UDP-N-acetyl-alpha-D-glucosamine = [(1-&gt;4)-N-acetyl-beta-D-glucosaminyl](n+1) + UDP + H(+). Its activity is regulated as follows. Requires proteolytic activation. Polymerizes chitin, a structural polymer of the cell wall and septum, by transferring the sugar moiety of UDP-GlcNAc to the non-reducing end of the growing chitin polymer. Also involved in forming cross walls in the hyphal phase. This Candida albicans (Yeast) protein is Chitin synthase 1 (CHS1).